A 242-amino-acid chain; its full sequence is MTTVSMRDMLQAGVHFGHQTRYWNPKMKPFIFGARNGVHIINLEHTVPMFNEALAFISNVASKKGKVLFVGTKRAAGEAIKEAAISCDQYYVDHRWLGGMLTNWKTVRQSIKRLKELESQSVDGTFDKLTKKEALMRTRELEKLEKSLGGIKNMGGLPDVLFVIGADHEHIAIKEANNLGIPVVAVVDTNSAPDGVNYIVPGNDDAMRAIRLYTTSVAAAAKAGRGQDLAVQAEQDGFVEAE.

Belongs to the universal ribosomal protein uS2 family.

This Shewanella putrefaciens (strain CN-32 / ATCC BAA-453) protein is Small ribosomal subunit protein uS2.